The primary structure comprises 407 residues: Imidazolonepropionase (407 aa).

Fe(3+)-binding residues include His-68 and His-70. Residues His-68 and His-70 each coordinate Zn(2+). 4-imidazolone-5-propanoate-binding residues include Arg-77, Tyr-140, and His-173. Tyr-140 lines the N-formimidoyl-L-glutamate pocket. His-238 contacts Fe(3+). Position 238 (His-238) interacts with Zn(2+). 4-imidazolone-5-propanoate is bound at residue Gln-241. Asp-313 is a Fe(3+) binding site. Asp-313 lines the Zn(2+) pocket. N-formimidoyl-L-glutamate contacts are provided by Asn-315 and Gly-317. Position 318 (Thr-318) interacts with 4-imidazolone-5-propanoate.

This sequence belongs to the metallo-dependent hydrolases superfamily. HutI family. Requires Zn(2+) as cofactor. Fe(3+) is required as a cofactor.

The protein localises to the cytoplasm. The catalysed reaction is 4-imidazolone-5-propanoate + H2O = N-formimidoyl-L-glutamate. It participates in amino-acid degradation; L-histidine degradation into L-glutamate; N-formimidoyl-L-glutamate from L-histidine: step 3/3. Its function is as follows. Catalyzes the hydrolytic cleavage of the carbon-nitrogen bond in imidazolone-5-propanoate to yield N-formimidoyl-L-glutamate. It is the third step in the universal histidine degradation pathway. In Burkholderia multivorans (strain ATCC 17616 / 249), this protein is Imidazolonepropionase.